A 623-amino-acid chain; its full sequence is (-)-limonene synthase TPS1, chloroplastic (623 aa).

The N-terminal 60 residues, 1–60 (MQCIAFHQFASSSSLPIWSSIDNRFTPKTSITSISKPKPKLKSKSNLKSRSRSSTCYPIQ), are a transit peptide targeting the chloroplast. The tract at residues 29–52 (TSITSISKPKPKLKSKSNLKSRSR) is disordered. Residues 37–51 (PKPKLKSKSNLKSRS) are compositionally biased toward basic residues. The (2E)-geranyl diphosphate site is built by arginine 337, aspartate 374, aspartate 378, arginine 516, and aspartate 519. Mg(2+) contacts are provided by aspartate 374 and aspartate 378. A DDXXD motif motif is present at residues 374–378 (DDMHD). The Mg(2+) site is built by aspartate 519, threonine 523, and glutamate 527.

It belongs to the terpene synthase family. Tpsb subfamily. The cofactor is Mg(2+). Requires Mn(2+) as cofactor. K(+) serves as cofactor. As to expression, trichome.

It localises to the plastid. Its subcellular location is the chloroplast. It catalyses the reaction (2E)-geranyl diphosphate = (4S)-limonene + diphosphate. It carries out the reaction (2E)-geranyl diphosphate = terpinolene + diphosphate. The enzyme catalyses (2E)-geranyl diphosphate = (1R,5R)-alpha-pinene + diphosphate. The catalysed reaction is (2E)-geranyl diphosphate = (1R,5R)-beta-pinene + diphosphate. It catalyses the reaction (2E)-geranyl diphosphate = beta-myrcene + diphosphate. It carries out the reaction (2E)-geranyl diphosphate = (4R)-limonene + diphosphate. It functions in the pathway secondary metabolite biosynthesis; terpenoid biosynthesis. It participates in terpene metabolism; (4S)-limonene biosynthesis; (4S)-limonene from geranyl diphosphate: step 1/1. In terms of biological role, involved in monoterpene (C10) olefins biosynthesis, constituants of cannabinoids and terpenoids-rich resins. Catalyzes mainly the conversion of (2E)-geranyl diphosphate to (-)-limonene, and also produces minor products such as (+)-limonene, (+)-alpha-pinene, terpinolene, (+)-beta-pinene and beta-myrcene. The protein is (-)-limonene synthase TPS1, chloroplastic of Cannabis sativa (Hemp).